The sequence spans 363 residues: 3-isopropylmalate dehydrogenase (363 aa).

NAD(+) is bound at residue 78-91; sequence GPKWEHLPPDQQPE. Positions 99, 109, 138, and 227 each coordinate substrate. Positions 227, 251, and 255 each coordinate Mg(2+). 285 to 297 contacts NAD(+); that stretch reads GSAPDIAGKNIAN.

Belongs to the isocitrate and isopropylmalate dehydrogenases family. LeuB type 1 subfamily. As to quaternary structure, homodimer. It depends on Mg(2+) as a cofactor. Mn(2+) serves as cofactor.

The protein localises to the cytoplasm. The enzyme catalyses (2R,3S)-3-isopropylmalate + NAD(+) = 4-methyl-2-oxopentanoate + CO2 + NADH. It participates in amino-acid biosynthesis; L-leucine biosynthesis; L-leucine from 3-methyl-2-oxobutanoate: step 3/4. With respect to regulation, requires K(+) ions for optimum activity. In terms of biological role, catalyzes the oxidation of 3-carboxy-2-hydroxy-4-methylpentanoate (3-isopropylmalate) to 3-carboxy-4-methyl-2-oxopentanoate. The product decarboxylates to 4-methyl-2 oxopentanoate. The protein is 3-isopropylmalate dehydrogenase of Escherichia coli (strain K12).